The sequence spans 47 residues: Sperm protamine P1 (47 aa).

Belongs to the protamine P1 family. In terms of tissue distribution, testis.

It is found in the nucleus. The protein resides in the chromosome. Its function is as follows. Protamines substitute for histones in the chromatin of sperm during the haploid phase of spermatogenesis. They compact sperm DNA into a highly condensed, stable and inactive complex. The polypeptide is Sperm protamine P1 (PRM1) (Galeopterus variegatus (Malayan flying lemur)).